The chain runs to 427 residues: Adenylosuccinate synthetase (427 aa).

Residues 12–18 (GDEGKGK) and 40–42 (GHT) each bind GTP. Residue Asp-13 is the Proton acceptor of the active site. Residues Asp-13 and Gly-40 each contribute to the Mg(2+) site. IMP contacts are provided by residues 13 to 16 (DEGK), 38 to 41 (NAGH), Thr-128, Arg-142, Gln-223, Thr-238, and Arg-302. Catalysis depends on His-41, which acts as the Proton donor. 298-304 (VTTGRAR) serves as a coordination point for substrate. GTP contacts are provided by residues Arg-304, 330 to 332 (KLD), and 412 to 414 (GVG).

Belongs to the adenylosuccinate synthetase family. In terms of assembly, homodimer. Mg(2+) is required as a cofactor.

The protein resides in the cytoplasm. It catalyses the reaction IMP + L-aspartate + GTP = N(6)-(1,2-dicarboxyethyl)-AMP + GDP + phosphate + 2 H(+). The protein operates within purine metabolism; AMP biosynthesis via de novo pathway; AMP from IMP: step 1/2. Functionally, plays an important role in the de novo pathway of purine nucleotide biosynthesis. Catalyzes the first committed step in the biosynthesis of AMP from IMP. This chain is Adenylosuccinate synthetase, found in Frankia alni (strain DSM 45986 / CECT 9034 / ACN14a).